The chain runs to 496 residues: Thiamine transporter 2 (496 aa).

Topologically, residues 1-7 (MDCYRTS) are cytoplasmic. A helical transmembrane segment spans residues 8–28 (LSSSWIYPTVILCLFGFFSMM). Residues 29 to 53 (RPSEPFLIPYLSGPDKNLTSAEITN) lie on the Extracellular side of the membrane. A glycan (N-linked (GlcNAc...) asparagine) is linked at Asn45. A helical transmembrane segment spans residues 54–74 (EIFPVWTYSYLVLLLPVFVLT). The Cytoplasmic segment spans residues 75-81 (DYVRYKP). The helical transmembrane segment at 82–102 (VIILQGISFIITWLLLLFGQG) threads the bilayer. The Extracellular portion of the chain corresponds to 103 to 110 (VKTMQVVE). A helical transmembrane segment spans residues 111 to 131 (FFYGMVTAAEVAYYAYIYSVV). At 132-144 (SPEHYQRVSGYCR) the chain is on the cytoplasmic side. A helical transmembrane segment spans residues 145–165 (SVTLAAYTAGSVLAQLLVSLA). The N-linked (GlcNAc...) asparagine glycan is linked to Asn166. Residues 166–169 (NMSY) lie on the Extracellular side of the membrane. Residues 170–190 (FYLNVISLASVSVAFLFSLFL) traverse the membrane as a helical segment. Residues 191–282 (PMPKKSMFFH…YSSKRLFYWS (92 aa)) lie on the Cytoplasmic side of the membrane. Residues 283-303 (LWWAFATAGFNQVLNYVQILW) form a helical membrane-spanning segment. Over 304–316 (DYKAPSQDSSIYN) the chain is Extracellular. A helical transmembrane segment spans residues 317-337 (GAVEAIATFGGAVAAFAVGYV). The Cytoplasmic portion of the chain corresponds to 338-342 (KVNWD). A helical transmembrane segment spans residues 343–363 (LLGELALVVFSVVNAGSLFLM). The Extracellular portion of the chain corresponds to 364 to 375 (HYTANIWACYAG). A helical membrane pass occupies residues 376–396 (YLIFKSSYMLLITIAVFQIAV). Over 397–405 (NLNVERYAL) the chain is Cytoplasmic. Residues 406 to 426 (VFGINTFIALVIQTIMTVIVV) traverse the membrane as a helical segment. Topologically, residues 427 to 434 (DQRGLNLP) are extracellular. The helical transmembrane segment at 435-455 (VSIQFLVYGSYFAVIAGIFLM) threads the bilayer. Residues 456–496 (RSMYITYSTKSQKDVQSPAPSENPDVSHPEEESNIIMSTKL) are Cytoplasmic-facing. The disordered stretch occupies residues 468–496 (KDVQSPAPSENPDVSHPEEESNIIMSTKL).

This sequence belongs to the reduced folate carrier (RFC) transporter (TC 2.A.48) family. In terms of tissue distribution, widely expressed but most abundant in placenta, kidney and liver.

The protein localises to the membrane. It carries out the reaction thiamine(out) + H(+)(in) = thiamine(in) + H(+)(out). The enzyme catalyses pyridoxine(out) + n H(+)(out) = pyridoxine(in) + n H(+)(in). With respect to regulation, pyridoxine transport is inhibited by carbonyl cyanide p-trifluoromethoxyphenylhydrazone (FCCP) and carbonyl cyanide m-chlorophenylhydrazone (CCCP). Functionally, mediates high affinity thiamine uptake, probably via a proton anti-port mechanism. Has no folate transport activity. Mediates H(+)-dependent pyridoxine transport. This is Thiamine transporter 2 (SLC19A3) from Homo sapiens (Human).